A 339-amino-acid polypeptide reads, in one-letter code: DNA-directed RNA polymerase subunit alpha (339 aa).

Positions 1-235 (MTIQKNWQEL…DQLNVFVNFE (235 aa)) are alpha N-terminal domain (alpha-NTD). Residues 251–339 (FNPAFLKKVD…ELAKRFEDHY (89 aa)) are alpha C-terminal domain (alpha-CTD).

This sequence belongs to the RNA polymerase alpha chain family. In terms of assembly, homodimer. The RNAP catalytic core consists of 2 alpha, 1 beta, 1 beta' and 1 omega subunit. When a sigma factor is associated with the core the holoenzyme is formed, which can initiate transcription.

The catalysed reaction is RNA(n) + a ribonucleoside 5'-triphosphate = RNA(n+1) + diphosphate. Functionally, DNA-dependent RNA polymerase catalyzes the transcription of DNA into RNA using the four ribonucleoside triphosphates as substrates. This Rhodopseudomonas palustris (strain BisB18) protein is DNA-directed RNA polymerase subunit alpha.